The primary structure comprises 150 residues: Transcriptional repressor NrdR (150 aa).

Residues 1–26 form a disordered region; the sequence is MKCPFCGNSDSKVVDSRPDKGGSGIR. A zinc finger lies at 3 to 34; the sequence is CPFCGNSDSKVVDSRPDKGGSGIRRRRECEQC. One can recognise an ATP-cone domain in the interval 49 to 139; it reads PLVLKKDGRR…VYRSFRDINE (91 aa).

Belongs to the NrdR family. It depends on Zn(2+) as a cofactor.

In terms of biological role, negatively regulates transcription of bacterial ribonucleotide reductase nrd genes and operons by binding to NrdR-boxes. The sequence is that of Transcriptional repressor NrdR from Pelobacter propionicus (strain DSM 2379 / NBRC 103807 / OttBd1).